The primary structure comprises 507 residues: ATP synthase subunit alpha, chloroplastic (507 aa).

170 to 177 lines the ATP pocket; it reads GDRQTGKT.

This sequence belongs to the ATPase alpha/beta chains family. In terms of assembly, F-type ATPases have 2 components, CF(1) - the catalytic core - and CF(0) - the membrane proton channel. CF(1) has five subunits: alpha(3), beta(3), gamma(1), delta(1), epsilon(1). CF(0) has four main subunits: a, b, b' and c.

The protein localises to the plastid. The protein resides in the chloroplast thylakoid membrane. It catalyses the reaction ATP + H2O + 4 H(+)(in) = ADP + phosphate + 5 H(+)(out). Its function is as follows. Produces ATP from ADP in the presence of a proton gradient across the membrane. The alpha chain is a regulatory subunit. This Liriodendron tulipifera (Tuliptree) protein is ATP synthase subunit alpha, chloroplastic.